The chain runs to 47 residues: Cytochrome b559 subunit beta (47 aa).

The helical transmembrane segment at 22–38 (WLAVHTLAIPTVFFLGA) threads the bilayer. His-26 provides a ligand contact to heme.

This sequence belongs to the PsbE/PsbF family. As to quaternary structure, heterodimer of an alpha subunit and a beta subunit. PSII is composed of 1 copy each of membrane proteins PsbA, PsbB, PsbC, PsbD, PsbE, PsbF, PsbH, PsbI, PsbJ, PsbK, PsbL, PsbM, PsbT, PsbX, PsbY, PsbZ, Psb30/Ycf12, peripheral proteins PsbO, CyanoQ (PsbQ), PsbU, PsbV and a large number of cofactors. It forms dimeric complexes. Requires heme b as cofactor.

Its subcellular location is the cellular thylakoid membrane. Its function is as follows. This b-type cytochrome is tightly associated with the reaction center of photosystem II (PSII). PSII is a light-driven water:plastoquinone oxidoreductase that uses light energy to abstract electrons from H(2)O, generating O(2) and a proton gradient subsequently used for ATP formation. It consists of a core antenna complex that captures photons, and an electron transfer chain that converts photonic excitation into a charge separation. The polypeptide is Cytochrome b559 subunit beta (Synechococcus sp. (strain JA-3-3Ab) (Cyanobacteria bacterium Yellowstone A-Prime)).